Here is a 393-residue protein sequence, read N- to C-terminus: Methylthioribose kinase (393 aa).

Residues N38, K53, and 107-109 (EDL) each bind ATP. D225 is a binding site for substrate. Residue 242 to 244 (DPE) coordinates ATP. R332 lines the substrate pocket.

The protein belongs to the methylthioribose kinase family. Homodimer.

It carries out the reaction 5-(methylsulfanyl)-D-ribose + ATP = 5-(methylsulfanyl)-alpha-D-ribose 1-phosphate + ADP + H(+). It participates in amino-acid biosynthesis; L-methionine biosynthesis via salvage pathway; S-methyl-5-thio-alpha-D-ribose 1-phosphate from S-methyl-5'-thioadenosine (hydrolase route): step 2/2. Its function is as follows. Catalyzes the phosphorylation of methylthioribose into methylthioribose-1-phosphate. This Bacillus cereus (strain ZK / E33L) protein is Methylthioribose kinase.